A 92-amino-acid polypeptide reads, in one-letter code: Small ribosomal subunit protein uS19c (92 aa).

This sequence belongs to the universal ribosomal protein uS19 family.

The protein localises to the plastid. The protein resides in the chloroplast. Functionally, protein S19 forms a complex with S13 that binds strongly to the 16S ribosomal RNA. This Thalassiosira pseudonana (Marine diatom) protein is Small ribosomal subunit protein uS19c.